A 344-amino-acid polypeptide reads, in one-letter code: Cyclin-G2 (344 aa).

Residues 298–324 (CFDGSESEDSGEDMSCGEESLSSSPPS) form a disordered region. Acidic residues predominate over residues 302-313 (SESEDSGEDMSC).

Belongs to the cyclin family. Cyclin G subfamily. As to expression, highest levels in intestine. Intermediate levels in spleen, brain and kidney. Low levels in testis, stomach, pancreas, liver, salivary gland and muscle. According to PubMed:9139721 also abundant in thymus.

The protein resides in the cytoplasm. It is found in the nucleus. Functionally, may play a role in growth regulation and in negative regulation of cell cycle progression. The chain is Cyclin-G2 (Ccng2) from Mus musculus (Mouse).